Consider the following 27-residue polypeptide: Caerulein precursor fragment R8 (27 aa).

In terms of tissue distribution, expressed by the skin glands.

It localises to the secreted. Antimicrobial peptide. In Xenopus ruwenzoriensis (Uganda clawed frog), this protein is Caerulein precursor fragment R8.